We begin with the raw amino-acid sequence, 554 residues long: Outer envelope protein 61 (554 aa).

Residues 1–525 (MFNGLMDPEM…GMEKAKKAKK (525 aa)) lie on the Cytoplasmic side of the membrane. TPR repeat units follow at residues 103–136 (AQML…LKEI) and 180–213 (VKAL…SPED). Disordered regions lie at residues 245 to 269 (TEEN…AQGV) and 395 to 439 (APAS…PSAP). The span at 254 to 263 (ENKKPSKEAN) shows a compositional bias: basic and acidic residues. Residues 412 to 423 (SLGASGSSSGNS) show a composition bias toward low complexity. The helical transmembrane segment at 526-546 (WLFGKGGLIFAILMLVLAMVL) threads the bilayer. Topologically, residues 547–554 (HRLGYIGN) are lumenal.

In terms of assembly, interacts (via TPR region) with HSP70-1, but not with HSP90-2. Interacts with ERDJ2A and ERDJ2B. In the ER membrane, associates with ERDJ2 in membrane complexes of 140 and 200 kDa and specifically interacts with the HSP70 and HSP90 chaperones via its TPR domain. As to expression, ubiquitous. Highest expression in leaves and lowest in roots.

It is found in the endoplasmic reticulum membrane. The protein localises to the plastid. The protein resides in the chloroplast outer membrane. Plays a role in protein import into the endoplasmic reticulum (ER). May function as chaperone docking protein during post-translational protein translocation into the ER. Chaperone receptor mediating Hsp70-dependent protein targeting to chloroplasts. Interacts specifically with some chloroplast precursors, but not with mitochondrial precursors. Able to select precursors for delivery to the chloroplast translocase independently of Hsp70. This Arabidopsis thaliana (Mouse-ear cress) protein is Outer envelope protein 61 (OEP61).